The chain runs to 166 residues: Putative 4-hydroxy-4-methyl-2-oxoglutarate aldolase (166 aa).

Residues 74–77 (GDQI) and R96 each bind substrate. D97 provides a ligand contact to a divalent metal cation.

This sequence belongs to the class II aldolase/RraA-like family. In terms of assembly, homotrimer. Requires a divalent metal cation as cofactor.

It carries out the reaction 4-hydroxy-4-methyl-2-oxoglutarate = 2 pyruvate. The enzyme catalyses oxaloacetate + H(+) = pyruvate + CO2. Catalyzes the aldol cleavage of 4-hydroxy-4-methyl-2-oxoglutarate (HMG) into 2 molecules of pyruvate. Also contains a secondary oxaloacetate (OAA) decarboxylase activity due to the common pyruvate enolate transition state formed following C-C bond cleavage in the retro-aldol and decarboxylation reactions. This is Putative 4-hydroxy-4-methyl-2-oxoglutarate aldolase from Xanthomonas campestris pv. campestris (strain B100).